The chain runs to 436 residues: 3-ketoacyl-CoA thiolase (436 aa).

Cys-99 serves as the catalytic Acyl-thioester intermediate. Residues His-392 and Cys-422 each act as proton acceptor in the active site.

It belongs to the thiolase-like superfamily. Thiolase family. Heterotetramer of two alpha chains (FadJ) and two beta chains (FadI).

It is found in the cytoplasm. The catalysed reaction is an acyl-CoA + acetyl-CoA = a 3-oxoacyl-CoA + CoA. Its pathway is lipid metabolism; fatty acid beta-oxidation. Catalyzes the final step of fatty acid oxidation in which acetyl-CoA is released and the CoA ester of a fatty acid two carbons shorter is formed. The chain is 3-ketoacyl-CoA thiolase from Escherichia coli (strain ATCC 8739 / DSM 1576 / NBRC 3972 / NCIMB 8545 / WDCM 00012 / Crooks).